The following is a 740-amino-acid chain: Phosphoribosylformylglycinamidine synthase subunit PurL (740 aa).

Histidine 50 is a catalytic residue. Residues tyrosine 53 and lysine 92 each coordinate ATP. Glutamate 94 is a Mg(2+) binding site. Substrate is bound by residues 95–98 (SHNH) and arginine 117. Catalysis depends on histidine 96, which acts as the Proton acceptor. Position 118 (aspartate 118) interacts with Mg(2+). Residue glutamine 241 participates in substrate binding. Aspartate 269 provides a ligand contact to Mg(2+). 313-315 (ESQ) is a binding site for substrate. The ATP site is built by aspartate 495 and glycine 532. Asparagine 533 serves as a coordination point for Mg(2+). Serine 535 provides a ligand contact to substrate.

The protein belongs to the FGAMS family. Monomer. Part of the FGAM synthase complex composed of 1 PurL, 1 PurQ and 2 PurS subunits.

It localises to the cytoplasm. The enzyme catalyses N(2)-formyl-N(1)-(5-phospho-beta-D-ribosyl)glycinamide + L-glutamine + ATP + H2O = 2-formamido-N(1)-(5-O-phospho-beta-D-ribosyl)acetamidine + L-glutamate + ADP + phosphate + H(+). The protein operates within purine metabolism; IMP biosynthesis via de novo pathway; 5-amino-1-(5-phospho-D-ribosyl)imidazole from N(2)-formyl-N(1)-(5-phospho-D-ribosyl)glycinamide: step 1/2. Part of the phosphoribosylformylglycinamidine synthase complex involved in the purines biosynthetic pathway. Catalyzes the ATP-dependent conversion of formylglycinamide ribonucleotide (FGAR) and glutamine to yield formylglycinamidine ribonucleotide (FGAM) and glutamate. The FGAM synthase complex is composed of three subunits. PurQ produces an ammonia molecule by converting glutamine to glutamate. PurL transfers the ammonia molecule to FGAR to form FGAM in an ATP-dependent manner. PurS interacts with PurQ and PurL and is thought to assist in the transfer of the ammonia molecule from PurQ to PurL. The polypeptide is Phosphoribosylformylglycinamidine synthase subunit PurL (Brucella abortus (strain S19)).